A 155-amino-acid chain; its full sequence is 3-hydroxyacyl-[acyl-carrier-protein] dehydratase FabZ (155 aa).

His54 is a catalytic residue.

Belongs to the thioester dehydratase family. FabZ subfamily.

The protein resides in the cytoplasm. The catalysed reaction is a (3R)-hydroxyacyl-[ACP] = a (2E)-enoyl-[ACP] + H2O. Functionally, involved in unsaturated fatty acids biosynthesis. Catalyzes the dehydration of short chain beta-hydroxyacyl-ACPs and long chain saturated and unsaturated beta-hydroxyacyl-ACPs. The sequence is that of 3-hydroxyacyl-[acyl-carrier-protein] dehydratase FabZ from Burkholderia lata (strain ATCC 17760 / DSM 23089 / LMG 22485 / NCIMB 9086 / R18194 / 383).